Consider the following 114-residue polypeptide: Photosystem II reaction center Psb28 protein (114 aa).

It belongs to the Psb28 family. Part of the photosystem II complex.

It localises to the plastid. Its subcellular location is the chloroplast thylakoid membrane. This is Photosystem II reaction center Psb28 protein from Thalassiosira pseudonana (Marine diatom).